The sequence spans 251 residues: Protein unc-119 homolog B (251 aa).

Residues Met1–Lys28 are disordered. An N-acetylserine modification is found at Ser2. An N6-acetyllysine modification is found at Lys24. Tyr142 lines the tetradecanoate pocket.

Belongs to the PDE6D/unc-119 family. As to quaternary structure, found in a complex with ARL3, RP2 and UNC119B; RP2 induces hydrolysis of GTP ARL3 in the complex, leading to the release of UNC119B. Interacts with NPHP3 (when myristoylated). Interacts with CYS1 (when myristoylated). Interacts with MACIR; interaction only takes place when UNC119B is not liganded with myristoylated proteins.

The protein resides in the cell projection. Its subcellular location is the cilium. Functionally, myristoyl-binding protein that acts as a cargo adapter: specifically binds the myristoyl moiety of a subset of N-terminally myristoylated proteins and is required for their localization. Binds myristoylated NPHP3 and plays a key role in localization of NPHP3 to the primary cilium membrane. Does not bind all myristoylated proteins. Probably plays a role in trafficking proteins in photoreceptor cells. The sequence is that of Protein unc-119 homolog B (UNC119B) from Homo sapiens (Human).